The chain runs to 337 residues: Viral cathepsin (337 aa).

The N-terminal stretch at 1 to 19 (MTLLMIFTILLVASSQIEG) is a signal peptide. The propeptide at 20–126 (HLKFDIHDAQ…DAPPDVHDEL (107 aa)) is activation peptide. Disulfide bonds link Cys-147-Cys-188, Cys-181-Cys-221, and Cys-276-Cys-324. Residue Cys-150 is part of the active site. N-linked (GlcNAc...) asparagine; by host glycosylation occurs at Asn-172. Catalysis depends on residues His-283 and Asn-303.

This sequence belongs to the peptidase C1 family. Synthesized as an inactive proenzyme and activated by proteolytic removal of the inhibitory propeptide.

The catalysed reaction is Endopeptidase of broad specificity, hydrolyzing substrates of both cathepsin L and cathepsin B.. Cysteine protease that plays an essential role in host liquefaction to facilitate horizontal transmission of the virus. May participate in the degradation of foreign protein expressed by the baculovirus system. This Adoxophyes honmai (Smaller tea tortrix moth) protein is Viral cathepsin (VCATH).